Reading from the N-terminus, the 478-residue chain is Histidine--tRNA ligase (478 aa).

This sequence belongs to the class-II aminoacyl-tRNA synthetase family. As to quaternary structure, homodimer.

Its subcellular location is the cytoplasm. The catalysed reaction is tRNA(His) + L-histidine + ATP = L-histidyl-tRNA(His) + AMP + diphosphate + H(+). This is Histidine--tRNA ligase (hisS) from Xanthomonas axonopodis pv. citri (strain 306).